A 112-amino-acid polypeptide reads, in one-letter code: UPF0122 protein CPR_1686 (112 aa).

It belongs to the UPF0122 family.

Its function is as follows. Might take part in the signal recognition particle (SRP) pathway. This is inferred from the conservation of its genetic proximity to ftsY/ffh. May be a regulatory protein. The protein is UPF0122 protein CPR_1686 of Clostridium perfringens (strain SM101 / Type A).